We begin with the raw amino-acid sequence, 227 residues long: ATP synthase F(0) complex subunit a (227 aa).

6 consecutive transmembrane segments (helical) span residues leucine 14–proline 34, tryptophan 69–leucine 89, glutamine 98–leucine 118, isoleucine 139–valine 159, alanine 167–proline 187, and serine 190–isoleucine 210.

It belongs to the ATPase A chain family. In terms of assembly, component of the ATP synthase complex composed at least of ATP5F1A/subunit alpha, ATP5F1B/subunit beta, ATP5MC1/subunit c (homooctomer), MT-ATP6/subunit a, MT-ATP8/subunit 8, ATP5ME/subunit e, ATP5MF/subunit f, ATP5MG/subunit g, ATP5MK/subunit k, ATP5MJ/subunit j, ATP5F1C/subunit gamma, ATP5F1D/subunit delta, ATP5F1E/subunit epsilon, ATP5PF/subunit F6, ATP5PB/subunit b, ATP5PD/subunit d, ATP5PO/subunit OSCP. ATP synthase complex consists of a soluble F(1) head domain (subunits alpha(3) and beta(3)) - the catalytic core - and a membrane F(0) domain - the membrane proton channel (subunits c, a, 8, e, f, g, k and j). These two domains are linked by a central stalk (subunits gamma, delta, and epsilon) rotating inside the F1 region and a stationary peripheral stalk (subunits F6, b, d, and OSCP). Interacts with DNAJC30; interaction is direct.

The protein resides in the mitochondrion inner membrane. The catalysed reaction is H(+)(in) = H(+)(out). Its function is as follows. Subunit a, of the mitochondrial membrane ATP synthase complex (F(1)F(0) ATP synthase or Complex V) that produces ATP from ADP in the presence of a proton gradient across the membrane which is generated by electron transport complexes of the respiratory chain. ATP synthase complex consist of a soluble F(1) head domain - the catalytic core - and a membrane F(1) domain - the membrane proton channel. These two domains are linked by a central stalk rotating inside the F(1) region and a stationary peripheral stalk. During catalysis, ATP synthesis in the catalytic domain of F(1) is coupled via a rotary mechanism of the central stalk subunits to proton translocation. With the subunit c (ATP5MC1), forms the proton-conducting channel in the F(0) domain, that contains two crucial half-channels (inlet and outlet) that facilitate proton movement from the mitochondrial intermembrane space (IMS) into the matrix. Protons are taken up via the inlet half-channel and released through the outlet half-channel, following a Grotthuss mechanism. This Anas platyrhynchos (Mallard) protein is ATP synthase F(0) complex subunit a.